Reading from the N-terminus, the 335-residue chain is Agamous-like MADS-box protein AGL104 (335 aa).

The 61-residue stretch at M1–T61 folds into the MADS-box domain. A coiled-coil region spans residues S124 to E151. A disordered region spans residues M302 to Q335. Over residues Q317–T327 the composition is skewed to basic and acidic residues.

As to quaternary structure, forms heterodimers with AGL30 and AGL65. In terms of tissue distribution, expressed in pollen.

Its subcellular location is the nucleus. Functionally, probable transcription factor that forms heterodimers with the MADS-box proteins AGL30 and AGL65 and is involved in the regulation of pollen maturation at the late stages of pollen development and pollen tube growth. This chain is Agamous-like MADS-box protein AGL104, found in Arabidopsis thaliana (Mouse-ear cress).